The sequence spans 311 residues: Glycine--tRNA ligase alpha subunit (311 aa).

This sequence belongs to the class-II aminoacyl-tRNA synthetase family. Tetramer of two alpha and two beta subunits.

Its subcellular location is the cytoplasm. The enzyme catalyses tRNA(Gly) + glycine + ATP = glycyl-tRNA(Gly) + AMP + diphosphate. The polypeptide is Glycine--tRNA ligase alpha subunit (Rhizobium meliloti (strain 1021) (Ensifer meliloti)).